Reading from the N-terminus, the 773-residue chain is Lon protease homolog 2, peroxisomal (773 aa).

In terms of domain architecture, Lon N-terminal spans 9-198; the sequence is LPVILVTSGV…MCIKWMNEKK (190 aa). Residue 336 to 343 coordinates ATP; that stretch reads GPPGIGKT. One can recognise a Lon proteolytic domain in the interval 587–766; the sequence is PLPAGVCFGL…EDVIGAMMDK (180 aa). Catalysis depends on residues S672 and K715. The Microbody targeting signal motif lies at 771-773; that stretch reads AKL.

Belongs to the peptidase S16 family.

The protein localises to the peroxisome matrix. It catalyses the reaction Hydrolysis of proteins in presence of ATP.. Its function is as follows. ATP-dependent serine protease that mediates the selective degradation of misfolded and unassembled polypeptides in the peroxisomal matrix. Necessary for type 2 peroxisome targeting signal (PTS2)-containing protein processing and facilitates peroxisome matrix protein import. The sequence is that of Lon protease homolog 2, peroxisomal from Caenorhabditis elegans.